Consider the following 246-residue polypeptide: Putative outer membrane protein YiaT (246 aa).

The signal sequence occupies residues 1–21 (MLINRNIVALFALPFMASATA).

The protein belongs to the MipA/OmpV family.

Its subcellular location is the cell outer membrane. The sequence is that of Putative outer membrane protein YiaT (yiaT) from Escherichia coli (strain K12).